The sequence spans 188 residues: Elongation factor P (188 aa).

Residue Lys-34 is modified to N6-(3,6-diaminohexanoyl)-5-hydroxylysine.

The protein belongs to the elongation factor P family. Post-translationally, may be beta-lysylated on the epsilon-amino group of Lys-34 by the combined action of EpmA and EpmB, and then hydroxylated on the C5 position of the same residue by EpmC (if this protein is present). Lysylation is critical for the stimulatory effect of EF-P on peptide-bond formation. The lysylation moiety may extend toward the peptidyltransferase center and stabilize the terminal 3-CCA end of the tRNA. Hydroxylation of the C5 position on Lys-34 may allow additional potential stabilizing hydrogen-bond interactions with the P-tRNA.

The protein resides in the cytoplasm. Its pathway is protein biosynthesis; polypeptide chain elongation. In terms of biological role, involved in peptide bond synthesis. Alleviates ribosome stalling that occurs when 3 or more consecutive Pro residues or the sequence PPG is present in a protein, possibly by augmenting the peptidyl transferase activity of the ribosome. Modification of Lys-34 is required for alleviation. The chain is Elongation factor P from Klebsiella pneumoniae (strain 342).